A 343-amino-acid polypeptide reads, in one-letter code: DNA-directed RNA polymerase subunit alpha (343 aa).

An alpha N-terminal domain (alpha-NTD) region spans residues 1–243; sequence MTQEIDEKIP…EQLDIFINFD (243 aa). The alpha C-terminal domain (alpha-CTD) stretch occupies residues 261–343; sequence ENPYLDKPVE…NAPSDAETEE (83 aa).

It belongs to the RNA polymerase alpha chain family. As to quaternary structure, homodimer. The RNAP catalytic core consists of 2 alpha, 1 beta, 1 beta' and 1 omega subunit. When a sigma factor is associated with the core the holoenzyme is formed, which can initiate transcription.

The enzyme catalyses RNA(n) + a ribonucleoside 5'-triphosphate = RNA(n+1) + diphosphate. DNA-dependent RNA polymerase catalyzes the transcription of DNA into RNA using the four ribonucleoside triphosphates as substrates. The sequence is that of DNA-directed RNA polymerase subunit alpha from Desulfotalea psychrophila (strain LSv54 / DSM 12343).